A 366-amino-acid polypeptide reads, in one-letter code: Anhydro-N-acetylmuramic acid kinase (366 aa).

10–17 (GTSLDGVD) contributes to the ATP binding site.

It belongs to the anhydro-N-acetylmuramic acid kinase family.

It carries out the reaction 1,6-anhydro-N-acetyl-beta-muramate + ATP + H2O = N-acetyl-D-muramate 6-phosphate + ADP + H(+). Its pathway is amino-sugar metabolism; 1,6-anhydro-N-acetylmuramate degradation. It functions in the pathway cell wall biogenesis; peptidoglycan recycling. Catalyzes the specific phosphorylation of 1,6-anhydro-N-acetylmuramic acid (anhMurNAc) with the simultaneous cleavage of the 1,6-anhydro ring, generating MurNAc-6-P. Is required for the utilization of anhMurNAc either imported from the medium or derived from its own cell wall murein, and thus plays a role in cell wall recycling. This is Anhydro-N-acetylmuramic acid kinase from Nitrobacter winogradskyi (strain ATCC 25391 / DSM 10237 / CIP 104748 / NCIMB 11846 / Nb-255).